A 624-amino-acid polypeptide reads, in one-letter code: Dihydroxy-acid dehydratase (624 aa).

Asp-81 contacts Mg(2+). Cys-122 is a [2Fe-2S] cluster binding site. Mg(2+)-binding residues include Asp-123 and Lys-124. The residue at position 124 (Lys-124) is an N6-carboxylysine. Cys-195 is a [2Fe-2S] cluster binding site. Glu-499 provides a ligand contact to Mg(2+). Residue Ser-525 is the Proton acceptor of the active site.

It belongs to the IlvD/Edd family. In terms of assembly, homodimer. [2Fe-2S] cluster is required as a cofactor. Mg(2+) serves as cofactor.

The enzyme catalyses (2R)-2,3-dihydroxy-3-methylbutanoate = 3-methyl-2-oxobutanoate + H2O. The catalysed reaction is (2R,3R)-2,3-dihydroxy-3-methylpentanoate = (S)-3-methyl-2-oxopentanoate + H2O. Its pathway is amino-acid biosynthesis; L-isoleucine biosynthesis; L-isoleucine from 2-oxobutanoate: step 3/4. It functions in the pathway amino-acid biosynthesis; L-valine biosynthesis; L-valine from pyruvate: step 3/4. Functions in the biosynthesis of branched-chain amino acids. Catalyzes the dehydration of (2R,3R)-2,3-dihydroxy-3-methylpentanoate (2,3-dihydroxy-3-methylvalerate) into 2-oxo-3-methylpentanoate (2-oxo-3-methylvalerate) and of (2R)-2,3-dihydroxy-3-methylbutanoate (2,3-dihydroxyisovalerate) into 2-oxo-3-methylbutanoate (2-oxoisovalerate), the penultimate precursor to L-isoleucine and L-valine, respectively. The chain is Dihydroxy-acid dehydratase from Shewanella baltica (strain OS185).